The chain runs to 338 residues: Lipoate-protein ligase A (338 aa).

Residues 29 to 216 (PATQRVLFLW…AFFAHYGERV (188 aa)) enclose the BPL/LPL catalytic domain. Residues R71, 76–79 (GAVF), and K134 each bind ATP. Position 134 (K134) interacts with (R)-lipoate.

It belongs to the LplA family. As to quaternary structure, monomer.

It localises to the cytoplasm. The enzyme catalyses L-lysyl-[lipoyl-carrier protein] + (R)-lipoate + ATP = N(6)-[(R)-lipoyl]-L-lysyl-[lipoyl-carrier protein] + AMP + diphosphate + H(+). It functions in the pathway protein modification; protein lipoylation via exogenous pathway; protein N(6)-(lipoyl)lysine from lipoate: step 1/2. It participates in protein modification; protein lipoylation via exogenous pathway; protein N(6)-(lipoyl)lysine from lipoate: step 2/2. Functionally, catalyzes both the ATP-dependent activation of exogenously supplied lipoate to lipoyl-AMP and the transfer of the activated lipoyl onto the lipoyl domains of lipoate-dependent enzymes. The chain is Lipoate-protein ligase A from Salmonella choleraesuis (strain SC-B67).